We begin with the raw amino-acid sequence, 331 residues long: Pyrimidine monooxygenase RutA (331 aa).

FMN contacts are provided by residues 79 to 80 (IK), Asn-145, Glu-154, 170 to 171 (RY), and Ser-220. Residues 300–331 (WLTEQSQKDTRSGTDTNVRQMADPTSASAFNH) are disordered. Residues 312–331 (GTDTNVRQMADPTSASAFNH) show a composition bias toward polar residues.

Belongs to the NtaA/SnaA/DszA monooxygenase family. RutA subfamily.

It carries out the reaction uracil + FMNH2 + NADH + O2 = (Z)-3-ureidoacrylate + FMN + NAD(+) + H2O + H(+). The catalysed reaction is thymine + FMNH2 + NADH + O2 = (Z)-2-methylureidoacrylate + FMN + NAD(+) + H2O + H(+). In terms of biological role, catalyzes the pyrimidine ring opening between N-3 and C-4 by an unusual flavin hydroperoxide-catalyzed mechanism, adding oxygen atoms in the process to yield ureidoacrylate peracid, that immediately reacts with FMN forming ureidoacrylate and FMN-N(5)-oxide. The FMN-N(5)-oxide reacts spontaneously with NADH to produce FMN. Requires the flavin reductase RutF to regenerate FMN in vivo. The sequence is that of Pyrimidine monooxygenase RutA from Escherichia coli O7:K1 (strain IAI39 / ExPEC).